Here is an 80-residue protein sequence, read N- to C-terminus: Cell division activator CedA (80 aa).

Belongs to the CedA family.

In terms of biological role, activates the cell division inhibited by chromosomal DNA over-replication. The polypeptide is Cell division activator CedA (Escherichia coli O1:K1 / APEC).